The chain runs to 590 residues: Membrane protein insertase YidC (590 aa).

5 consecutive transmembrane segments (helical) span residues 5-25 (SVIG…FMKP), 368-388 (GLII…LSLA), 433-453 (LGGC…FYVF), 483-503 (LPLY…TVFF), and 519-539 (IMMW…PAGL).

Belongs to the OXA1/ALB3/YidC family. Type 1 subfamily. As to quaternary structure, interacts with the Sec translocase complex via SecD. Specifically interacts with transmembrane segments of nascent integral membrane proteins during membrane integration.

The protein resides in the cell inner membrane. Required for the insertion and/or proper folding and/or complex formation of integral membrane proteins into the membrane. Involved in integration of membrane proteins that insert both dependently and independently of the Sec translocase complex, as well as at least some lipoproteins. Aids folding of multispanning membrane proteins. The polypeptide is Membrane protein insertase YidC (Chlorobaculum tepidum (strain ATCC 49652 / DSM 12025 / NBRC 103806 / TLS) (Chlorobium tepidum)).